Consider the following 193-residue polypeptide: Thymidine kinase (193 aa).

Residues 16-23 (GPMFSGKS) and 89-92 (DEIQ) each bind ATP. E90 functions as the Proton acceptor in the catalytic mechanism. C146, C149, C184, and C187 together coordinate Zn(2+).

The protein belongs to the thymidine kinase family. As to quaternary structure, homotetramer.

It is found in the cytoplasm. It carries out the reaction thymidine + ATP = dTMP + ADP + H(+). The protein is Thymidine kinase of Caldanaerobacter subterraneus subsp. tengcongensis (strain DSM 15242 / JCM 11007 / NBRC 100824 / MB4) (Thermoanaerobacter tengcongensis).